An 854-amino-acid chain; its full sequence is DNA mismatch repair protein MutS (854 aa).

Position 615–622 (615–622 (GPNMGGKS)) interacts with ATP.

It belongs to the DNA mismatch repair MutS family.

Its function is as follows. This protein is involved in the repair of mismatches in DNA. It is possible that it carries out the mismatch recognition step. This protein has a weak ATPase activity. The protein is DNA mismatch repair protein MutS of Proteus mirabilis (strain HI4320).